Reading from the N-terminus, the 287-residue chain is Aquaporin PIP1-1 (287 aa).

Helical transmembrane passes span 57-77 (IAEFVATFLFLYISILTVMGV) and 92-114 (IAWSFGGMILALVYCTAGISGHI). An NPA 1 motif is present at residues 115-117 (NPA). The next 3 helical transmembrane spans lie at 134–154 (VFYIIMQCLGAICGRGVVKGF), 176–196 (GDGLGAEIVGTFILVYTVFSA), and 210–230 (ILAPLPIGFAVFLVHLATMGI). The NPA 2 signature appears at 236–238 (NPA). The chain crosses the membrane as a helical span at residues 258–278 (IFWVGPFIGAALAAIYHQVII).

It belongs to the MIP/aquaporin (TC 1.A.8) family. PIP (TC 1.A.8.11) subfamily. As to quaternary structure, may interact with PIP1-2 to form heteromers. As to expression, highly expressed in roots, shoots and developing tassels, and at lower levels in leaves.

The protein resides in the cell membrane. Functionally, water channel required to facilitate the transport of water across cell membrane. Active as heteromers with PIP1-2, but not as homomers. This chain is Aquaporin PIP1-1 (PIP1-1), found in Zea mays (Maize).